We begin with the raw amino-acid sequence, 426 residues long: Serine--tRNA ligase (426 aa).

233-235 (TSE) serves as a coordination point for L-serine. Position 264 to 266 (264 to 266 (RAE)) interacts with ATP. Glu287 lines the L-serine pocket. 351-354 (EISS) contacts ATP. Ser387 serves as a coordination point for L-serine.

Belongs to the class-II aminoacyl-tRNA synthetase family. Type-1 seryl-tRNA synthetase subfamily. In terms of assembly, homodimer. The tRNA molecule binds across the dimer.

The protein localises to the cytoplasm. It carries out the reaction tRNA(Ser) + L-serine + ATP = L-seryl-tRNA(Ser) + AMP + diphosphate + H(+). The enzyme catalyses tRNA(Sec) + L-serine + ATP = L-seryl-tRNA(Sec) + AMP + diphosphate + H(+). The protein operates within aminoacyl-tRNA biosynthesis; selenocysteinyl-tRNA(Sec) biosynthesis; L-seryl-tRNA(Sec) from L-serine and tRNA(Sec): step 1/1. Catalyzes the attachment of serine to tRNA(Ser). Is also able to aminoacylate tRNA(Sec) with serine, to form the misacylated tRNA L-seryl-tRNA(Sec), which will be further converted into selenocysteinyl-tRNA(Sec). This chain is Serine--tRNA ligase, found in Stenotrophomonas maltophilia (strain K279a).